We begin with the raw amino-acid sequence, 206 residues long: Cell division protein SepF (206 aa).

The span at 31–53 (EEKERRKTERQEQRQAVKQEKRT) shows a compositional bias: basic and acidic residues. A disordered region spans residues 31-81 (EEKERRKTERQEQRQAVKQEKRTFPSQRPAFSEEAPTSSSSKLSAASGSSD). The segment covering 60-80 (AFSEEAPTSSSSKLSAASGSS) has biased composition (low complexity).

Belongs to the SepF family. As to quaternary structure, homodimer. Interacts with FtsZ.

Its subcellular location is the cytoplasm. In terms of biological role, cell division protein that is part of the divisome complex and is recruited early to the Z-ring. Probably stimulates Z-ring formation, perhaps through the cross-linking of FtsZ protofilaments. Its function overlaps with FtsA. The chain is Cell division protein SepF from Lachnoclostridium phytofermentans (strain ATCC 700394 / DSM 18823 / ISDg) (Clostridium phytofermentans).